The following is a 488-amino-acid chain: GTPase Der (488 aa).

EngA-type G domains lie at 3–166 (PVVA…AEAM) and 199–372 (IKLA…DSAT). GTP contacts are provided by residues 9 to 16 (GRPNVGKS), 56 to 60 (DTGGI), 118 to 121 (NKVD), 205 to 212 (GKPNVGKS), 252 to 256 (DTAGV), and 317 to 320 (NKWD). Residues 373-457 (RRVSTSMLTR…PIQLRFQEGD (85 aa)) enclose the KH-like domain. Positions 469-488 (MSQERRRKRALSHIKDRKTK) are disordered. Over residues 473–488 (RRRKRALSHIKDRKTK) the composition is skewed to basic residues.

This sequence belongs to the TRAFAC class TrmE-Era-EngA-EngB-Septin-like GTPase superfamily. EngA (Der) GTPase family. As to quaternary structure, associates with the 50S ribosomal subunit.

Its function is as follows. GTPase that plays an essential role in the late steps of ribosome biogenesis. In Shewanella putrefaciens (strain CN-32 / ATCC BAA-453), this protein is GTPase Der.